A 443-amino-acid polypeptide reads, in one-letter code: Large ribosomal subunit protein mL50 (443 aa).

Positions 121–145 (QPTRADAPEKIRDPNYEPATSGAGL) are disordered. The span at 126–135 (DAPEKIRDPN) shows a compositional bias: basic and acidic residues.

This sequence belongs to the mitochondrion-specific ribosomal protein mL50 family. Component of the mitochondrial large ribosomal subunit (mt-LSU). Mature N.crassa 74S mitochondrial ribosomes consist of a small (37S) and a large (54S) subunit. The 37S small subunit contains a 16S ribosomal RNA (16S mt-rRNA) and 32 different proteins. The 54S large subunit contains a 23S rRNA (23S mt-rRNA) and 42 different proteins.

Its subcellular location is the mitochondrion. Component of the mitochondrial ribosome (mitoribosome), a dedicated translation machinery responsible for the synthesis of mitochondrial genome-encoded proteins, including at least some of the essential transmembrane subunits of the mitochondrial respiratory chain. The mitoribosomes are attached to the mitochondrial inner membrane and translation products are cotranslationally integrated into the membrane. The chain is Large ribosomal subunit protein mL50 (mrpl13) from Neurospora crassa (strain ATCC 24698 / 74-OR23-1A / CBS 708.71 / DSM 1257 / FGSC 987).